The chain runs to 314 residues: DNA-directed RNA polymerase subunit alpha (314 aa).

The alpha N-terminal domain (alpha-NTD) stretch occupies residues 1–227 (MTKFEIECVE…ELLHPLKEIN (227 aa)). Residues 241-314 (KINQILIEEL…LPKEKTVKPN (74 aa)) form an alpha C-terminal domain (alpha-CTD) region.

This sequence belongs to the RNA polymerase alpha chain family. In terms of assembly, in plastids the minimal PEP RNA polymerase catalytic core is composed of four subunits: alpha, beta, beta', and beta''. When a (nuclear-encoded) sigma factor is associated with the core the holoenzyme is formed, which can initiate transcription.

It is found in the plastid. It localises to the chloroplast. The catalysed reaction is RNA(n) + a ribonucleoside 5'-triphosphate = RNA(n+1) + diphosphate. DNA-dependent RNA polymerase catalyzes the transcription of DNA into RNA using the four ribonucleoside triphosphates as substrates. This Rhodomonas salina (Cryptomonas salina) protein is DNA-directed RNA polymerase subunit alpha.